We begin with the raw amino-acid sequence, 303 residues long: Indole-3-glycerol phosphate synthase (303 aa).

The protein belongs to the TrpC family.

The enzyme catalyses 1-(2-carboxyphenylamino)-1-deoxy-D-ribulose 5-phosphate + H(+) = (1S,2R)-1-C-(indol-3-yl)glycerol 3-phosphate + CO2 + H2O. It participates in amino-acid biosynthesis; L-tryptophan biosynthesis; L-tryptophan from chorismate: step 4/5. In Acaryochloris marina (strain MBIC 11017), this protein is Indole-3-glycerol phosphate synthase.